Here is a 72-residue protein sequence, read N- to C-terminus: Translation initiation factor IF-1 2 (72 aa).

The region spanning 1 to 72 (MAKEDAIEVD…KRGRITYRMK (72 aa)) is the S1-like domain.

Belongs to the IF-1 family. As to quaternary structure, component of the 30S ribosomal translation pre-initiation complex which assembles on the 30S ribosome in the order IF-2 and IF-3, IF-1 and N-formylmethionyl-tRNA(fMet); mRNA recruitment can occur at any time during PIC assembly.

The protein resides in the cytoplasm. In terms of biological role, one of the essential components for the initiation of protein synthesis. Stabilizes the binding of IF-2 and IF-3 on the 30S subunit to which N-formylmethionyl-tRNA(fMet) subsequently binds. Helps modulate mRNA selection, yielding the 30S pre-initiation complex (PIC). Upon addition of the 50S ribosomal subunit IF-1, IF-2 and IF-3 are released leaving the mature 70S translation initiation complex. This is Translation initiation factor IF-1 2 from Nitratidesulfovibrio vulgaris (strain DP4) (Desulfovibrio vulgaris).